The sequence spans 489 residues: Betaine aldehyde dehydrogenase (489 aa).

K(+) is bound by residues Thr26 and Asp93. Position 150–152 (150–152 (GAW)) interacts with NAD(+). Lys162 (charge relay system) is an active-site residue. Residue 176–179 (KPSE) coordinates NAD(+). Val180 is a K(+) binding site. 229 to 232 (GVET) is an NAD(+) binding site. Residue Leu245 participates in K(+) binding. Catalysis depends on Glu251, which acts as the Proton acceptor. NAD(+) is bound by residues Gly253, Cys285, and Glu386. The Nucleophile role is filled by Cys285. Cys285 is subject to Cysteine sulfenic acid (-SOH). Lys456 and Gly459 together coordinate K(+). Glu463 serves as the catalytic Charge relay system.

Belongs to the aldehyde dehydrogenase family. Dimer of dimers. It depends on K(+) as a cofactor.

It carries out the reaction betaine aldehyde + NAD(+) + H2O = glycine betaine + NADH + 2 H(+). Its pathway is amine and polyamine biosynthesis; betaine biosynthesis via choline pathway; betaine from betaine aldehyde: step 1/1. Its function is as follows. Involved in the biosynthesis of the osmoprotectant glycine betaine. Catalyzes the irreversible oxidation of betaine aldehyde to the corresponding acid. The chain is Betaine aldehyde dehydrogenase from Burkholderia orbicola (strain MC0-3).